The chain runs to 255 residues: Receptor expression-enhancing protein 3 (255 aa).

3 helical membrane-spanning segments follow: residues Met1–Tyr21, Tyr35–Ala55, and Val59–Pro79. Positions Thr158–Ser242 are disordered. Thr201 carries the phosphothreonine modification. Ser210 is subject to Phosphoserine. Polar residues predominate over residues Arg222–Thr231.

Belongs to the DP1 family. As to expression, expressed in circumvallate papillae.

The protein localises to the endoplasmic reticulum membrane. In terms of biological role, microtubule-binding protein required to ensure proper cell division and nuclear envelope reassembly by sequestering the endoplasmic reticulum away from chromosomes during mitosis. Probably acts by clearing the endoplasmic reticulum membrane from metaphase chromosomes. This Homo sapiens (Human) protein is Receptor expression-enhancing protein 3 (REEP3).